The primary structure comprises 353 residues: Fe(3+) ions import ATP-binding protein FbpC 1 (353 aa).

Positions 9–239 (VVFRNICKQF…PASAFIADFM (231 aa)) constitute an ABC transporter domain. ATP is bound at residue 41–48 (GPSGCGKT).

The protein belongs to the ABC transporter superfamily. Fe(3+) ion importer (TC 3.A.1.10) family. In terms of assembly, the complex is composed of two ATP-binding proteins (FbpC), two transmembrane proteins (FbpB) and a solute-binding protein (FbpA).

It is found in the cell inner membrane. It carries out the reaction Fe(3+)(out) + ATP + H2O = Fe(3+)(in) + ADP + phosphate + H(+). Part of the ABC transporter complex FbpABC involved in Fe(3+) ions import. Responsible for energy coupling to the transport system. In Rhizobium meliloti (strain 1021) (Ensifer meliloti), this protein is Fe(3+) ions import ATP-binding protein FbpC 1.